Reading from the N-terminus, the 394-residue chain is 4-hydroxyphenylpyruvate dioxygenase (394 aa).

VOC domains lie at 27–161 (GYDH…LIER) and 193–351 (HIDH…LFTK). Histidine 196, histidine 279, and glutamate 362 together coordinate Fe cation.

The protein belongs to the 4HPPD family. Requires Fe cation as cofactor.

It catalyses the reaction 3-(4-hydroxyphenyl)pyruvate + O2 = homogentisate + CO2. Its pathway is amino-acid degradation; L-phenylalanine degradation; acetoacetate and fumarate from L-phenylalanine: step 3/6. The chain is 4-hydroxyphenylpyruvate dioxygenase from Yarrowia lipolytica (strain CLIB 122 / E 150) (Yeast).